We begin with the raw amino-acid sequence, 102 residues long: uncharacterized protein (102 aa).

Positions 1–41 (MAAPRQIAFYGKGGTGKPKRKPEPVTASKEDRCLGSPSKNK) are disordered.

The protein to the N-terminal of nitrogenase iron protein (NifH). Has lost the ATP-binding site.

In terms of biological role, this protein is either not expressed, expressed at low levels or rapidly degraded. This is an uncharacterized protein from Rhizobium meliloti (Ensifer meliloti).